Reading from the N-terminus, the 503-residue chain is 3-octaprenyl-4-hydroxybenzoate carboxy-lyase (503 aa).

Mn(2+) is bound at residue Asn176. Prenylated FMN contacts are provided by residues 179 to 181 (IYR), 193 to 195 (RWL), and 198 to 199 (RG). Glu242 contacts Mn(2+). Asp303 serves as the catalytic Proton donor.

Belongs to the UbiD family. Homohexamer. Prenylated FMN serves as cofactor. It depends on Mn(2+) as a cofactor.

The protein localises to the cell membrane. The enzyme catalyses a 4-hydroxy-3-(all-trans-polyprenyl)benzoate + H(+) = a 2-(all-trans-polyprenyl)phenol + CO2. Its pathway is cofactor biosynthesis; ubiquinone biosynthesis. Catalyzes the decarboxylation of 3-octaprenyl-4-hydroxy benzoate to 2-octaprenylphenol, an intermediate step in ubiquinone biosynthesis. The polypeptide is 3-octaprenyl-4-hydroxybenzoate carboxy-lyase (Ralstonia pickettii (strain 12J)).